A 509-amino-acid polypeptide reads, in one-letter code: Maturase K (509 aa).

The protein belongs to the intron maturase 2 family. MatK subfamily.

The protein resides in the plastid. The protein localises to the chloroplast. Its function is as follows. Usually encoded in the trnK tRNA gene intron. Probably assists in splicing its own and other chloroplast group II introns. In Solanum bulbocastanum (Wild potato), this protein is Maturase K.